The following is a 633-amino-acid chain: MSEPTANLQPASRTPLLDRVNSPEDLKRLGRDQLPQLAAELREEIVRVCSVGGLHLASSLGATDLIVALHYVLHSPRDRILFDVGHQAYAHKMLTGRRHLMHTVKKEGGLSGFTKVSESEHDAITVGHASTSLANALGMALARDALGQDYKVAAVIGDGSLTGGMALAALNTIGDLGRRMLIVLNDNEMSISENVGAINRFMRGLQVQKWFQEGEEAGKKAVQAVSKPLANLMSRAKSSTRHFFDPASVNPFAAMGVRYVGPVDGHNVQELVWLIERLVDLDGPTILHVVTKKGKGLSYAEADPIKWHGPGKFDPATGESVPSNAYSWSSAFGDAVTELARLDPRTFVITPAMREGSGLVRYSQVHPHRYLDVGIAEDVAVTTAAGMALQGMRPIVAIYSTFLQRAYDQVLHDVAIENLNVTFAIDRGGIVGADGATHNGVFDLSYLRSIPNVGIGLPKDAAELRGMLKYAQEHAGPFAIRYPRGNVERVPEGTWPELRWGTWERLQDGDDVVILAGGKALEYALKAARDLPGVGVVNARFVKPLDQGMLREVATKARALVTVEDNTVVGGFGSAVLEALSALGLRTPVRVLGIPDAFQDHATVESVHARAGIDAPAIRTVLAELGVDVPLEV.

The span at 1 to 12 shows a compositional bias: polar residues; sequence MSEPTANLQPAS. Positions 1-21 are disordered; the sequence is MSEPTANLQPASRTPLLDRVN. Thiamine diphosphate contacts are provided by residues histidine 86 and 127-129; that span reads GHA. Aspartate 158 is a Mg(2+) binding site. Thiamine diphosphate is bound by residues 159-160, asparagine 187, and glutamate 377; that span reads GS. Mg(2+) is bound at residue asparagine 187.

It belongs to the transketolase family. DXPS subfamily. Homodimer. The cofactor is Mg(2+). It depends on thiamine diphosphate as a cofactor.

It carries out the reaction D-glyceraldehyde 3-phosphate + pyruvate + H(+) = 1-deoxy-D-xylulose 5-phosphate + CO2. The protein operates within metabolic intermediate biosynthesis; 1-deoxy-D-xylulose 5-phosphate biosynthesis; 1-deoxy-D-xylulose 5-phosphate from D-glyceraldehyde 3-phosphate and pyruvate: step 1/1. In terms of biological role, catalyzes the acyloin condensation reaction between C atoms 2 and 3 of pyruvate and glyceraldehyde 3-phosphate to yield 1-deoxy-D-xylulose-5-phosphate (DXP). The polypeptide is 1-deoxy-D-xylulose-5-phosphate synthase (Deinococcus geothermalis (strain DSM 11300 / CIP 105573 / AG-3a)).